We begin with the raw amino-acid sequence, 568 residues long: Protein phosphatase 1 regulatory inhibitor subunit 16B (568 aa).

The stretch at 15 to 55 (EKVPTLERLRAAQKRRAQQLKKWAQYEQDLQHRKRKHERKR) forms a coiled coil. The residue at position 69 (Ser-69) is a Phosphoserine. 4 ANK repeats span residues 100–129 (DGLT…NVNA), 133–162 (ELWT…DLLA), 228–257 (QGAT…RVDV), and 261–290 (DGWE…SLSA). Residues 327–346 (RHKSSLSRRTSSAGSRGKVV) are disordered. Phosphoserine occurs at positions 333, 337, and 350. The span at 333 to 342 (SRRTSSAGSR) shows a compositional bias: low complexity. The segment at 373-404 (SASEDQRNSTYNGDIRETRTDQENKDPNPRLE) is disordered. Positions 386 to 404 (DIRETRTDQENKDPNPRLE) are enriched in basic and acidic residues. At Ser-477 the chain carries Phosphoserine. The segment at 504-525 (GSGVSRTGEGSSEGKAPLIGGR) is disordered. The stretch at 531-560 (SNGTSVYYTVTSGDPPLLKFKAPIEEMEEK) is one ANK 5 repeat. The S-palmitoyl cysteine moiety is linked to residue Cys-564. The residue at position 565 (Cys-565) is a Cysteine methyl ester. Residue Cys-565 is the site of S-farnesyl cysteine attachment. Residues 566 to 568 (RIS) constitute a propeptide, removed in mature form.

In terms of assembly, interacts with PPP1CA, PPP1CB and MSN. Interacts (via its fourth ankyrin repeat) with the mature dimeric form of RPSA/LAMR1. Interacts with EEF1A1. Interacts with PTEN. Interacts with ECE1. Phosphorylated by PKA and, after PKA priming, by GSK3B. Phosphorylation by GSK3B reduces its association with PP1C and enhances PP1C activity. Dephosphorylation by its associated PP1C results in enhanced association with PP1C, but reduced PP1C activity.

The protein resides in the cell membrane. It is found in the nucleus. It localises to the cell projection. Its function is as follows. Regulator of protein phosphatase 1 (PP1) that acts as a positive regulator of pulmonary endothelial cell (EC) barrier function. Protects the endothelial barrier from lipopolysaccharide (LPS)-induced vascular leakage. Involved in the regulation of the PI3K/AKT signaling pathway. Involved in the regulation of angiogenesis and endothelial cell proliferation through the control of ECE1 dephosphorylation, trafficking and activity. Involved in the regulation of endothelial cell filopodia extension. May be a downstream target for TGF-beta1 signaling cascade in endothelial cells. Involved in PKA-mediated moesin dephosphorylation which is important in EC barrier protection against thrombin stimulation. Promotes the interaction of PPP1CA with RPSA/LAMR1 and in turn facilitates the dephosphorylation of RPSA/LAMR1. Involved in the dephosphorylation of EEF1A1. This is Protein phosphatase 1 regulatory inhibitor subunit 16B (PPP1R16B) from Bos taurus (Bovine).